We begin with the raw amino-acid sequence, 142 residues long: Hemoglobin subunit alpha-4 (142 aa).

Ser1 is subject to N-acetylserine. The Globin domain occupies 1 to 142 (SLSAKDKANV…LALALAEKYR (142 aa)). His59 contributes to the O2 binding site. His88 is a binding site for heme b.

The protein belongs to the globin family. Heterotetramer of two alpha chains and two beta chains. Red blood cells.

Involved in oxygen transport from gills to the various peripheral tissues. The chain is Hemoglobin subunit alpha-4 (hba4) from Oncorhynchus mykiss (Rainbow trout).